A 365-amino-acid polypeptide reads, in one-letter code: UDP-N-acetylglucosamine--N-acetylmuramyl-(pentapeptide) pyrophosphoryl-undecaprenol N-acetylglucosamine transferase (365 aa).

UDP-N-acetyl-alpha-D-glucosamine is bound by residues 12–14 (TGG), Asn-128, Arg-169, Ser-195, and Gln-296.

It belongs to the glycosyltransferase 28 family. MurG subfamily.

It localises to the cell inner membrane. The enzyme catalyses di-trans,octa-cis-undecaprenyl diphospho-N-acetyl-alpha-D-muramoyl-L-alanyl-D-glutamyl-meso-2,6-diaminopimeloyl-D-alanyl-D-alanine + UDP-N-acetyl-alpha-D-glucosamine = di-trans,octa-cis-undecaprenyl diphospho-[N-acetyl-alpha-D-glucosaminyl-(1-&gt;4)]-N-acetyl-alpha-D-muramoyl-L-alanyl-D-glutamyl-meso-2,6-diaminopimeloyl-D-alanyl-D-alanine + UDP + H(+). Its pathway is cell wall biogenesis; peptidoglycan biosynthesis. Its function is as follows. Cell wall formation. Catalyzes the transfer of a GlcNAc subunit on undecaprenyl-pyrophosphoryl-MurNAc-pentapeptide (lipid intermediate I) to form undecaprenyl-pyrophosphoryl-MurNAc-(pentapeptide)GlcNAc (lipid intermediate II). The chain is UDP-N-acetylglucosamine--N-acetylmuramyl-(pentapeptide) pyrophosphoryl-undecaprenol N-acetylglucosamine transferase from Gluconobacter oxydans (strain 621H) (Gluconobacter suboxydans).